The following is a 361-amino-acid chain: Beta-hexosaminidase (361 aa).

Substrate contacts are provided by residues Asp69, Arg77, Arg144, and 174 to 175 (KH). The active-site Proton donor/acceptor is His187. Residue Asp258 is the Nucleophile of the active site.

Belongs to the glycosyl hydrolase 3 family. NagZ subfamily.

It localises to the cytoplasm. The enzyme catalyses Hydrolysis of terminal non-reducing N-acetyl-D-hexosamine residues in N-acetyl-beta-D-hexosaminides.. The protein operates within cell wall biogenesis; peptidoglycan recycling. In terms of biological role, plays a role in peptidoglycan recycling by cleaving the terminal beta-1,4-linked N-acetylglucosamine (GlcNAc) from peptide-linked peptidoglycan fragments, giving rise to free GlcNAc, anhydro-N-acetylmuramic acid and anhydro-N-acetylmuramic acid-linked peptides. The chain is Beta-hexosaminidase from Neisseria meningitidis serogroup C / serotype 2a (strain ATCC 700532 / DSM 15464 / FAM18).